A 146-amino-acid polypeptide reads, in one-letter code: Protein disulfide-isomerase 5-1 (146 aa).

Residues 1-25 (MTLGARLVAPMIILLLFIPIELVKA) form the signal peptide. The 108-residue stretch at 26 to 133 (EVITLTPETF…LKAFVVEETE (108 aa)) folds into the Thioredoxin domain. Residues cysteine 55 and cysteine 58 each act as nucleophile in the active site. A disulfide bridge connects residues cysteine 55 and cysteine 58.

Belongs to the protein disulfide isomerase family.

Functionally, acts as a protein-folding catalyst that interacts with nascent polypeptides to catalyze the formation, isomerization, and reduction or oxidation of disulfide bonds. In Arabidopsis thaliana (Mouse-ear cress), this protein is Protein disulfide-isomerase 5-1 (PDIL5-1).